We begin with the raw amino-acid sequence, 382 residues long: RNA binding protein fox-1 homolog 1 (382 aa).

A disordered region spans residues 1-121 (MNCEREQLRG…NKSQPKRLHV (121 aa)). The segment covering 70–87 (QTHSEQSPADTSAQTVSG) has biased composition (polar residues). Residues 88–99 (TATQTDDAAPTD) are compositionally biased toward low complexity. A compositionally biased stretch (polar residues) spans 100-113 (GQPQTQPSENTENK). Residues 117 to 193 (KRLHVSNIPF…RKIEVNNATA (77 aa)) form the RRM domain. Arginine 317 carries the asymmetric dimethylarginine modification. A disordered region spans residues 357 to 382 (MPQGSSPSTDFRGAKLHTSRPLLSGS).

Binds to the C-terminus of ATXN2.

It localises to the nucleus. The protein resides in the cytoplasm. Its function is as follows. RNA-binding protein that regulates alternative splicing events by binding to 5'-UGCAUGU-3' elements. Prevents binding of U2AF2 to the 3'-splice site. Regulates alternative splicing of tissue-specific exons and of differentially spliced exons during erythropoiesis. The sequence is that of RNA binding protein fox-1 homolog 1 (RBFOX1) from Pongo abelii (Sumatran orangutan).